A 405-amino-acid polypeptide reads, in one-letter code: Glucose-1-phosphate adenylyltransferase (405 aa).

Alpha-D-glucose 1-phosphate contacts are provided by residues G164, 179–180 (EK), and S197.

Belongs to the bacterial/plant glucose-1-phosphate adenylyltransferase family. As to quaternary structure, homotetramer.

It carries out the reaction alpha-D-glucose 1-phosphate + ATP + H(+) = ADP-alpha-D-glucose + diphosphate. It participates in glycan biosynthesis; glycogen biosynthesis. Its function is as follows. Involved in the biosynthesis of ADP-glucose, a building block required for the elongation reactions to produce glycogen. Catalyzes the reaction between ATP and alpha-D-glucose 1-phosphate (G1P) to produce pyrophosphate and ADP-Glc. This is Glucose-1-phosphate adenylyltransferase from Corynebacterium jeikeium (strain K411).